Consider the following 341-residue polypeptide: Paired box protein Pax-9 (341 aa).

A DNA-binding region (paired) is located at residues 4–130 (AFGEVNQLGG…SSISRILRNK (127 aa)). The PAI subdomain stretch occupies residues 7–63 (EVNQLGGVFVNGRPLPNAIRLRIVELAQLGIRPCDISRQLRVSHGCVSKILARYNET). Residues 82 to 130 (TVVKHIRTYKQRDPGIFAWEIRDRLLADGVCDKYNVPSVSSISRILRNK) are RED subdomain. The interaction with KDM5B stretch occupies residues 168–189 (AAAAKVPTPPGVPAIPGSVAMP).

As to quaternary structure, interacts with KDM5B.

The protein resides in the nucleus. In terms of biological role, transcription factor required for normal development of thymus, parathyroid glands, ultimobranchial bodies, teeth, skeletal elements of skull and larynx as well as distal limbs. The polypeptide is Paired box protein Pax-9 (PAX9) (Callimico goeldii (Goeldi's marmoset)).